A 545-amino-acid chain; its full sequence is Chaperonin GroEL 1 (545 aa).

Residues 30-33 (TLGP), K51, 87-91 (DGTTT), G415, 479-481 (NAA), and D495 contribute to the ATP site.

Belongs to the chaperonin (HSP60) family. Forms a cylinder of 14 subunits composed of two heptameric rings stacked back-to-back. Interacts with the co-chaperonin GroES.

The protein localises to the cytoplasm. It carries out the reaction ATP + H2O + a folded polypeptide = ADP + phosphate + an unfolded polypeptide.. Together with its co-chaperonin GroES, plays an essential role in assisting protein folding. The GroEL-GroES system forms a nano-cage that allows encapsulation of the non-native substrate proteins and provides a physical environment optimized to promote and accelerate protein folding. In Methylococcus capsulatus (strain ATCC 33009 / NCIMB 11132 / Bath), this protein is Chaperonin GroEL 1.